The primary structure comprises 219 residues: ATP synthase protein MI25 (219 aa).

Residues 29–49 (ISIYNEEMIVARCFIGFLILS) traverse the membrane as a helical segment.

It belongs to the ATPase protein MI25 family. F-type ATPases have 2 components, CF(1) - the catalytic core - and CF(0) - the membrane proton channel. CF(1) has five subunits: alpha(3), beta(3), gamma(1), delta(1), epsilon(1). CF(0) has three main subunits: a, b and c.

The protein localises to the mitochondrion membrane. This is one of the chains of the nonenzymatic component (CF(0) subunit) of the mitochondrial ATPase complex. The chain is ATP synthase protein MI25 from Zea mays (Maize).